A 70-amino-acid polypeptide reads, in one-letter code: Large ribosomal subunit protein eL38 (70 aa).

The protein belongs to the eukaryotic ribosomal protein eL38 family.

The sequence is that of Large ribosomal subunit protein eL38 (RpL38) from Lonomia obliqua (Moth).